The primary structure comprises 314 residues: 3'-5' exoribonuclease YhaM (314 aa).

Residues H163 to K279 form the HD domain.

The protein belongs to the YhaM family.

Functionally, shows a 3'-5' exoribonuclease activity. The sequence is that of 3'-5' exoribonuclease YhaM from Bacillus mycoides (strain KBAB4) (Bacillus weihenstephanensis).